The sequence spans 608 residues: UvrABC system protein C (608 aa).

The GIY-YIG domain occupies 18–96; that stretch reads NQPGVYRMYN…IKKYKPRYNV (79 aa). The UVR domain occupies 206-241; that stretch reads KQVIDSLVQHMERASTDLRFEAAARYRDQISALNKV.

It belongs to the UvrC family. In terms of assembly, interacts with UvrB in an incision complex.

It is found in the cytoplasm. Functionally, the UvrABC repair system catalyzes the recognition and processing of DNA lesions. UvrC both incises the 5' and 3' sides of the lesion. The N-terminal half is responsible for the 3' incision and the C-terminal half is responsible for the 5' incision. In Pseudoalteromonas atlantica (strain T6c / ATCC BAA-1087), this protein is UvrABC system protein C.